Here is a 378-residue protein sequence, read N- to C-terminus: Protein SLG1 (378 aa).

The first 21 residues, 1 to 21 (MRPNKTSLLLALLSILSQANA), serve as a signal peptide directing secretion. Positions 22–110 (YEYVNCFSSL…EDAYSVYQLD (89 aa)) constitute a WSC domain. Residues 22-264 (YEYVNCFSSL…THKKKANVGA (243 aa)) lie on the Extracellular side of the membrane. Asparagine 65 is a glycosylation site (N-linked (GlcNAc...) asparagine). Disordered regions lie at residues 115–201 (SNSI…TSST) and 236–256 (QNSGSATGTAGSDSTSGSKTH). Over residues 236 to 253 (QNSGSATGTAGSDSTSGS) the composition is skewed to low complexity. The chain crosses the membrane as a helical span at residues 265 to 285 (IVGGVVGGVVGAVAIALCILL). Over 286–378 (IVRHINMKRE…LTVVNPDEAD (93 aa)) the chain is Cytoplasmic. Positions 318-378 (ASSFSSNHGP…LTVVNPDEAD (61 aa)) are disordered. Residues 319-331 (SSFSSNHGPSSGS) show a composition bias toward low complexity. A phosphoserine mark is found at serine 331 and serine 353.

Glycosylated. Phosphorylated. Phosphorylation serves a negative regulatory role.

Its subcellular location is the cell membrane. In terms of biological role, plays a role during G1 to regulate entering or exiting the cell cycle. Involved in stress responses. Has a role in cell wall integrity signaling. Activates ROM1 or ROM2 catalyzed guanine nucleotide exchange toward RHO1. Important regulator of the actin cytoskeleton rearrangements in conditions of cell wall expansion and membrane stretching. Specifically required for the actin reorganization induced by hypo-osmotic shock. Multicopy suppressor of 1,3-beta-glucan synthase (GS). Activates GS upstream of RHO1. Acts positively on the PKC1-MAPK pathway. Activates transiently SLT2 during alkaline stress, which leads to an increase in the expression of several specific genes. The protein is Protein SLG1 (SLG1) of Saccharomyces cerevisiae (strain ATCC 204508 / S288c) (Baker's yeast).